We begin with the raw amino-acid sequence, 408 residues long: Phosphoglycerate kinase (408 aa).

Substrate contacts are provided by residues 22–24 (DIN), arginine 39, 60–63 (HQSR), arginine 117, and arginine 157. Residues glutamate 332 and 358–361 (GGHT) contribute to the ATP site.

It belongs to the phosphoglycerate kinase family. Monomer.

It is found in the cytoplasm. The enzyme catalyses (2R)-3-phosphoglycerate + ATP = (2R)-3-phospho-glyceroyl phosphate + ADP. It functions in the pathway carbohydrate degradation; glycolysis; pyruvate from D-glyceraldehyde 3-phosphate: step 2/5. This chain is Phosphoglycerate kinase, found in Thermoplasma volcanium (strain ATCC 51530 / DSM 4299 / JCM 9571 / NBRC 15438 / GSS1).